Reading from the N-terminus, the 330-residue chain is Putative ADP-ribosyl glycohydrolase L543 (330 aa).

Belongs to the ADP-ribosylglycohydrolase family.

This Acanthamoeba polyphaga mimivirus (APMV) protein is Putative ADP-ribosyl glycohydrolase L543.